A 148-amino-acid chain; its full sequence is Large ribosomal subunit protein uL13 (148 aa).

The tract at residues 128-148 is disordered; it reads PEHPHQAQNPQPFEINAKVEK.

It belongs to the universal ribosomal protein uL13 family. In terms of assembly, part of the 50S ribosomal subunit.

In terms of biological role, this protein is one of the early assembly proteins of the 50S ribosomal subunit, although it is not seen to bind rRNA by itself. It is important during the early stages of 50S assembly. This chain is Large ribosomal subunit protein uL13, found in Saccharopolyspora erythraea (strain ATCC 11635 / DSM 40517 / JCM 4748 / NBRC 13426 / NCIMB 8594 / NRRL 2338).